The following is a 174-amino-acid chain: ATP-dependent protease subunit HslV (174 aa).

Thr-2 is a catalytic residue. Residues Ala-157, Cys-160, and Thr-163 each contribute to the Na(+) site.

The protein belongs to the peptidase T1B family. HslV subfamily. As to quaternary structure, a double ring-shaped homohexamer of HslV is capped on each side by a ring-shaped HslU homohexamer. The assembly of the HslU/HslV complex is dependent on binding of ATP.

It localises to the cytoplasm. It catalyses the reaction ATP-dependent cleavage of peptide bonds with broad specificity.. With respect to regulation, allosterically activated by HslU binding. Functionally, protease subunit of a proteasome-like degradation complex believed to be a general protein degrading machinery. The sequence is that of ATP-dependent protease subunit HslV from Shewanella baltica (strain OS195).